We begin with the raw amino-acid sequence, 178 residues long: Ribosome maturation factor RimM (178 aa).

The PRC barrel domain occupies 98–178 (DGEYYWNQLE…RILVDWDPEF (81 aa)).

The protein belongs to the RimM family. In terms of assembly, binds ribosomal protein uS19.

It is found in the cytoplasm. An accessory protein needed during the final step in the assembly of 30S ribosomal subunit, possibly for assembly of the head region. Essential for efficient processing of 16S rRNA. May be needed both before and after RbfA during the maturation of 16S rRNA. It has affinity for free ribosomal 30S subunits but not for 70S ribosomes. The polypeptide is Ribosome maturation factor RimM (Cellvibrio japonicus (strain Ueda107) (Pseudomonas fluorescens subsp. cellulosa)).